We begin with the raw amino-acid sequence, 101 residues long: UPF0213 protein VC0395_0675/VC395_A0575 (101 aa).

Residues 9-85 (SPWFVYLVRC…KALSKSQKEA (77 aa)) enclose the GIY-YIG domain.

Belongs to the UPF0213 family.

The protein is UPF0213 protein VC0395_0675/VC395_A0575 of Vibrio cholerae serotype O1 (strain ATCC 39541 / Classical Ogawa 395 / O395).